The primary structure comprises 200 residues: Ribonuclease HII (200 aa).

Residues 14–200 (ERVAGLDEAG…HRQSFTLFRD (187 aa)) enclose the RNase H type-2 domain. Residues D20, E21, and D112 each coordinate a divalent metal cation.

This sequence belongs to the RNase HII family. It depends on Mn(2+) as a cofactor. Mg(2+) serves as cofactor.

It is found in the cytoplasm. The catalysed reaction is Endonucleolytic cleavage to 5'-phosphomonoester.. In terms of biological role, endonuclease that specifically degrades the RNA of RNA-DNA hybrids. In Salinibacter ruber (strain DSM 13855 / M31), this protein is Ribonuclease HII.